The primary structure comprises 84 residues: Dolichol phosphate-mannose biosynthesis regulatory protein (84 aa).

A run of 2 helical transmembrane segments spans residues 11 to 31 (FGLV…VILL) and 49 to 69 (YAVL…GLFI).

It belongs to the DPM2 family. In terms of assembly, component of the dolichol-phosphate mannose (DPM) synthase complex composed of DPM1, DPM2 and DPM3; in the complex interacts directly with DPM3. Component of the glycosylphosphatidylinositol-N-acetylglucosaminyltransferase (GPI-GnT) complex composed at least by PIGA, PIGC, PIGH, PIGP, PIGQ, PIGY and DPM2. Interacts with PIGA, PIGC and PIGQ.

The protein resides in the endoplasmic reticulum membrane. Its pathway is protein modification; protein glycosylation. Regulates the biosynthesis of dolichol phosphate-mannose. Regulatory subunit of the dolichol-phosphate mannose (DPM) synthase complex; essential for the ER localization and stable expression of DPM1. Part of the glycosylphosphatidylinositol-N-acetylglucosaminyltransferase (GPI-GnT) complex that catalyzes the transfer of N-acetylglucosamine from UDP-N-acetylglucosamine to phosphatidylinositol and participates in the first step of GPI biosynthesis. May act by regulating the GPI-GNT complex. The chain is Dolichol phosphate-mannose biosynthesis regulatory protein from Mus musculus (Mouse).